We begin with the raw amino-acid sequence, 244 residues long: Ribosomal RNA small subunit methyltransferase G (244 aa).

Residues G79, F84, 130-131 (AE), and R150 contribute to the S-adenosyl-L-methionine site. The interval 221–244 (KKPSPKRYPRKPGTPAKQPLTAPM) is disordered.

The protein belongs to the methyltransferase superfamily. RNA methyltransferase RsmG family.

It localises to the cytoplasm. Its function is as follows. Specifically methylates the N7 position of a guanine in 16S rRNA. The sequence is that of Ribosomal RNA small subunit methyltransferase G from Lactiplantibacillus plantarum (strain ATCC BAA-793 / NCIMB 8826 / WCFS1) (Lactobacillus plantarum).